The following is a 1405-amino-acid chain: Rho guanine nucleotide exchange factor 18 (1405 aa).

Disordered stretches follow at residues 1-47 (MGSE…EDGF), 92-115 (ETHR…ALPQ), and 289-330 (PGKS…PGKR). Basic and acidic residues-rich tracts occupy residues 92–103 (ETHRQEARRESS) and 308–330 (RQKE…PGKR). Residues 347–372 (SSCPLCGEPLLNSASLKEHPRTTLLS) form a C2H2-type; degenerate zinc finger. Residues 485 to 682 (KRQDVLYELM…KDIISQVDAK (198 aa)) form the DH domain. Residues 723–825 (QLHLEGALCW…WMAHIRRAVE (103 aa)) enclose the PH domain. Residues 936–1016 (QVEEGSVSAG…PQAVEMPSTE (81 aa)) form a disordered region. The residue at position 952 (T952) is a Phosphothreonine. S961 bears the Phosphoserine mark. A coiled-coil region spans residues 1084-1181 (FEKQREERAG…RERLELLRRF (98 aa)). Disordered stretches follow at residues 1198–1242 (EAQP…VERP), 1274–1309 (RQTA…WESS), and 1328–1405 (ESAS…VIFF). Residues S1336 and S1338 each carry the phosphoserine modification. Over residues 1355-1365 (FPAPSPAPAAT) the composition is skewed to pro residues. The segment covering 1375-1394 (TSLPPVSPASSLPTTPLATT) has biased composition (low complexity). The span at 1396–1405 (EVSKEDVIFF) shows a compositional bias: basic and acidic residues.

In terms of assembly, interacts with SEPT9; interaction may inhibit GEF activity. Interacts with Gbetagamma subunits GNB1 and GNG2. Interacts with EPB41L4B. Interacts with PATJ (via C-terminus).

Its subcellular location is the cytoplasm. The protein localises to the cytoskeleton. It is found in the cell membrane. It localises to the apical cell membrane. Acts as a guanine nucleotide exchange factor (GEF) for RhoA GTPases. May play a role in actin cytoskeleton reorganization in different tissues since its activation induces formation of actin stress fibers. Also acts as a GEF for RAC1, inducing production of reactive oxygen species (ROS). Does not act as a GEF for CDC42. The G protein beta-gamma (Gbetagamma) subunits of heterotrimeric G proteins act as activators, explaining the integrated effects of LPA and other G-protein coupled receptor agonists on actin stress fiber formation, cell shape change and ROS production. Required for EPB41L4B-mediated regulation of the circumferential actomyosin belt in epithelial cells. This is Rho guanine nucleotide exchange factor 18 (Arhgef18) from Mus musculus (Mouse).